Reading from the N-terminus, the 394-residue chain is MTTLTPLRSVTVNNTYPYTIAIGPGLLHDPLRLAATIRGRHALILSDSEVAPRYAAQLQETLLRARPDLHLNVFTLPAGETSKSLENFSAAIAQLATLGATRDACLFALGGGVIGDLAGFTAACWMRGIDYVQVPTTLLAMVDSSVGGKTAVDIPQGKNMVGAFHPPRAVIADTDTLATLPLRELRAGLSEVIKYGAIRDPVFFHWLQTTREALLARDPAALAQAIARSCEHKADIVGRDPLEKGERVLLNLGHTFGHAIETAQGYSTPGSNNLNHGEAVAVGMVLAARLSNALSLAPAQDTETLKNLLDAYGLPTVLPSGLTPEMLLERMRLDKKNIAGRLRLVLWRGIGHAEAVSDVDEATVRQILANSTNQHTTYSPHQHATTKPPNRRPH.

NAD(+) is bound by residues 112–116 (GVIGD), 136–137 (TT), Lys-149, Lys-158, and 176–179 (TLAT). Zn(2+) contacts are provided by Glu-191, His-254, and His-276. A compositionally biased stretch (polar residues) spans 371-388 (STNQHTTYSPHQHATTKP). The tract at residues 371-394 (STNQHTTYSPHQHATTKPPNRRPH) is disordered.

This sequence belongs to the sugar phosphate cyclases superfamily. Dehydroquinate synthase family. The cofactor is NAD(+). Requires Co(2+) as cofactor. Zn(2+) is required as a cofactor.

Its subcellular location is the cytoplasm. The catalysed reaction is 7-phospho-2-dehydro-3-deoxy-D-arabino-heptonate = 3-dehydroquinate + phosphate. The protein operates within metabolic intermediate biosynthesis; chorismate biosynthesis; chorismate from D-erythrose 4-phosphate and phosphoenolpyruvate: step 2/7. Functionally, catalyzes the conversion of 3-deoxy-D-arabino-heptulosonate 7-phosphate (DAHP) to dehydroquinate (DHQ). The chain is 3-dehydroquinate synthase from Xylella fastidiosa (strain 9a5c).